A 294-amino-acid chain; its full sequence is ATP phosphoribosyltransferase (294 aa).

It belongs to the ATP phosphoribosyltransferase family. Long subfamily. Mg(2+) is required as a cofactor.

The protein resides in the cytoplasm. The enzyme catalyses 1-(5-phospho-beta-D-ribosyl)-ATP + diphosphate = 5-phospho-alpha-D-ribose 1-diphosphate + ATP. Its pathway is amino-acid biosynthesis; L-histidine biosynthesis; L-histidine from 5-phospho-alpha-D-ribose 1-diphosphate: step 1/9. With respect to regulation, feedback inhibited by histidine. Functionally, catalyzes the condensation of ATP and 5-phosphoribose 1-diphosphate to form N'-(5'-phosphoribosyl)-ATP (PR-ATP). Has a crucial role in the pathway because the rate of histidine biosynthesis seems to be controlled primarily by regulation of HisG enzymatic activity. This Maricaulis maris (strain MCS10) (Caulobacter maris) protein is ATP phosphoribosyltransferase.